A 276-amino-acid chain; its full sequence is UDP-3-O-acyl-N-acetylglucosamine deacetylase (276 aa).

Residues H76, H234, and D238 each contribute to the Zn(2+) site. The active-site Proton donor is the H261.

It belongs to the LpxC family. It depends on Zn(2+) as a cofactor.

The catalysed reaction is a UDP-3-O-[(3R)-3-hydroxyacyl]-N-acetyl-alpha-D-glucosamine + H2O = a UDP-3-O-[(3R)-3-hydroxyacyl]-alpha-D-glucosamine + acetate. It functions in the pathway glycolipid biosynthesis; lipid IV(A) biosynthesis; lipid IV(A) from (3R)-3-hydroxytetradecanoyl-[acyl-carrier-protein] and UDP-N-acetyl-alpha-D-glucosamine: step 2/6. In terms of biological role, catalyzes the hydrolysis of UDP-3-O-myristoyl-N-acetylglucosamine to form UDP-3-O-myristoylglucosamine and acetate, the committed step in lipid A biosynthesis. The chain is UDP-3-O-acyl-N-acetylglucosamine deacetylase from Synechocystis sp. (strain ATCC 27184 / PCC 6803 / Kazusa).